The chain runs to 503 residues: MAILLGLVVGVLTLVAWWVLQNYTYWKRRGIPHDPPNIPLGNTGELWRTMPLAGILKRTYLKFRKQTDGPFAGFYLYAMKYIVITDVDFVKTVLIRDFDKFHDRGVYHNEKDDPLTNNLATIEGQKWKNLRQKLTHTFTSAKMKSMFSTVLNVGDEMIRVVDEKISSSSQTLEVTDIVSRFTSDVIGICAFGLKCNSLRDPKAEFVQMGYSALRERRHGWLVDLLIFGMPKLAVKLGFQFLLPSVQKFYMKIVQDTIDYRMKRKVTRNDFMDTLIDMKQQYDKGDKENGLAFNEVAAQAFVFFLAGFEAGSTTMGFTLYELACNQDVQDKLRAEIDSVLERYNGKLEYDSMQDLFYMEKVINESLRKHPVVAHLARIATKPYQHSNPKYFIEAGTGVLVSTLGIHHDPEFYPEPEKFIPERFDEEQVKKRPTCAFLPFGAGPRNCIGLRFGRMQVIIGLALLIHNFRFELHPKTPVPMKYTINNLLLGSEGGIHLNITKVVRD.

A heme-binding site is contributed by C445.

Belongs to the cytochrome P450 family. Heme is required as a cofactor.

The protein resides in the endoplasmic reticulum membrane. Its subcellular location is the microsome membrane. Its function is as follows. May be involved in the metabolism of insect hormones and in the breakdown of synthetic insecticides. This chain is Probable cytochrome P450 6a19 (Cyp6a19), found in Drosophila melanogaster (Fruit fly).